The chain runs to 239 residues: MRPSQRQANELRPVRLTRRYTRHAEGSVLVEFGDTRVLCTASVEEAVPPFLKGKGRGWVTAEYGMLPRATHTRSAREAAKGKQTGRTQEIQRLIGRSLRAVVDLAALGERQVVIDCDVLQADGGTRTASITGAYVALHDALEGLVAAGKLAANPMTDFVAAISVGIVDGVPVLDLDYTEDSGCDTDMNVVMTGSGGIIEVQGTAEGTPFSRTELNALIDLAEAGIGRLVELQKAALAGA.

Phosphate-binding positions include R86 and 124-126 (GTR).

This sequence belongs to the RNase PH family. Homohexameric ring arranged as a trimer of dimers.

It carries out the reaction tRNA(n+1) + phosphate = tRNA(n) + a ribonucleoside 5'-diphosphate. In terms of biological role, phosphorolytic 3'-5' exoribonuclease that plays an important role in tRNA 3'-end maturation. Removes nucleotide residues following the 3'-CCA terminus of tRNAs; can also add nucleotides to the ends of RNA molecules by using nucleoside diphosphates as substrates, but this may not be physiologically important. Probably plays a role in initiation of 16S rRNA degradation (leading to ribosome degradation) during starvation. In Azoarcus sp. (strain BH72), this protein is Ribonuclease PH.